The sequence spans 581 residues: Proline--tRNA ligase (581 aa).

It belongs to the class-II aminoacyl-tRNA synthetase family. ProS type 1 subfamily. Homodimer.

It localises to the cytoplasm. It catalyses the reaction tRNA(Pro) + L-proline + ATP = L-prolyl-tRNA(Pro) + AMP + diphosphate. In terms of biological role, catalyzes the attachment of proline to tRNA(Pro) in a two-step reaction: proline is first activated by ATP to form Pro-AMP and then transferred to the acceptor end of tRNA(Pro). As ProRS can inadvertently accommodate and process non-cognate amino acids such as alanine and cysteine, to avoid such errors it has two additional distinct editing activities against alanine. One activity is designated as 'pretransfer' editing and involves the tRNA(Pro)-independent hydrolysis of activated Ala-AMP. The other activity is designated 'posttransfer' editing and involves deacylation of mischarged Ala-tRNA(Pro). The misacylated Cys-tRNA(Pro) is not edited by ProRS. In Rhodococcus opacus (strain B4), this protein is Proline--tRNA ligase.